A 260-amino-acid polypeptide reads, in one-letter code: MTILAEIVKYKQSLLQNGYYQDKLNTLKSVKIQNKKSFINAIEKEPKLAIIAEIKSKSPTVNDLPERDLSQQISDYEKYGANAVSILTDEKYFGGSFERLQALTTKTTLPVLCKDFIIDPLQIDVAKQAGASMILLIVNILSDKQLKDLYNYAISQNLEVLIEVHDRHELERAYKVNAKLIGVNNRDLKRFVTNVEHTNTILENKKPNHHYISESGIHDASDVRKILHSGIDGLLIGEALMRCDNLSEFLPQLKMQKVKS.

The protein belongs to the TrpC family.

It carries out the reaction 1-(2-carboxyphenylamino)-1-deoxy-D-ribulose 5-phosphate + H(+) = (1S,2R)-1-C-(indol-3-yl)glycerol 3-phosphate + CO2 + H2O. Its pathway is amino-acid biosynthesis; L-tryptophan biosynthesis; L-tryptophan from chorismate: step 4/5. This chain is Indole-3-glycerol phosphate synthase, found in Staphylococcus aureus (strain Mu3 / ATCC 700698).